A 362-amino-acid chain; its full sequence is Caspase activity and apoptosis inhibitor 1 (362 aa).

A compositionally biased stretch (basic residues) spans 1–14 (MTGKKSSREKRRKR). 2 disordered regions span residues 1–44 (MTGK…SGCG) and 65–101 (TGGG…GSLQ). Low complexity predominate over residues 19-32 (AAAALAAPDLVPAV). 2 stretches are compositionally biased toward gly residues: residues 33–44 (GGSGSGSTSGCG) and 65–74 (TGGGSGGSCW). Ser89 is subject to Phosphoserine. Thr90 carries the phosphothreonine modification. A Glycyl lysine isopeptide (Lys-Gly) (interchain with G-Cter in SUMO2) cross-link involves residue Lys105. 2 positions are modified to phosphoserine: Ser121 and Ser204. Disordered regions lie at residues 226 to 251 (SCVD…GKGE), 269 to 291 (GPCN…EAGQ), and 309 to 332 (LAES…DVQP). A compositionally biased stretch (basic and acidic residues) spans 235 to 251 (RENKQPEGLELKQGKGE). Residues 273–282 (EEAAAPEVPE) show a composition bias toward low complexity. A coiled-coil region spans residues 282 to 312 (ENTVQSEAGQIDDLEKDIEKSVNEILGLAES). At Ser313 the chain carries Phosphoserine.

In terms of biological role, anti-apoptotic protein that modulates a caspase-10 dependent mitochondrial caspase-3/9 feedback amplification loop. The protein is Caspase activity and apoptosis inhibitor 1 (CAAP1) of Bos taurus (Bovine).